The primary structure comprises 206 residues: Two-component response regulator ORR7 (206 aa).

A disordered region spans residues 53–92 (VVPLHDNASAEDDDDDEEDDDEDDDDDDDEDDEEEAAPPY). Residues 61 to 88 (SAEDDDDDEEDDDEDDDDDDDEDDEEEA) show a composition bias toward acidic residues. Residues 92–205 (YVMAVDDSSV…DISRITSRML (114 aa)) form the Response regulatory domain. At Asp-138 the chain carries 4-aspartylphosphate.

This sequence belongs to the ARR family. Type-A subfamily. In terms of processing, two-component system major event consists of a His-to-Asp phosphorelay between a sensor histidine kinase (HK) and a response regulator (RR). In plants, the His-to-Asp phosphorelay involves an additional intermediate named Histidine-containing phosphotransfer protein (HPt). This multistep phosphorelay consists of a His-Asp-His-Asp sequential transfer of a phosphate group between first a His and an Asp of the HK protein, followed by the transfer to a conserved His of the HPt protein and finally the transfer to an Asp in the receiver domain of the RR protein. In terms of tissue distribution, expressed in flowers, and at low levels in roots, mature leaves and shoots.

Functions as a response regulator involved in His-to-Asp phosphorelay signal transduction system. Phosphorylation of the Asp residue in the receiver domain activates the ability of the protein to promote the transcription of target genes. Type-A response regulators seem to act as negative regulators of the cytokinin signaling. This chain is Two-component response regulator ORR7, found in Oryza sativa subsp. indica (Rice).